Reading from the N-terminus, the 559-residue chain is Oxygen-dependent choline dehydrogenase (559 aa).

4 to 33 (DYIIIGAGSAGNVLAARLTEESDVSVLLLE) provides a ligand contact to FAD. The tract at residues 182–202 (EGFGPMDRTVTPKGRRASTAR) is disordered. Catalysis depends on His471, which acts as the Proton acceptor.

Belongs to the GMC oxidoreductase family. It depends on FAD as a cofactor.

It carries out the reaction choline + A = betaine aldehyde + AH2. The enzyme catalyses betaine aldehyde + NAD(+) + H2O = glycine betaine + NADH + 2 H(+). It participates in amine and polyamine biosynthesis; betaine biosynthesis via choline pathway; betaine aldehyde from choline (cytochrome c reductase route): step 1/1. Functionally, involved in the biosynthesis of the osmoprotectant glycine betaine. Catalyzes the oxidation of choline to betaine aldehyde and betaine aldehyde to glycine betaine at the same rate. This chain is Oxygen-dependent choline dehydrogenase, found in Pectobacterium atrosepticum (strain SCRI 1043 / ATCC BAA-672) (Erwinia carotovora subsp. atroseptica).